A 126-amino-acid polypeptide reads, in one-letter code: Glycine cleavage system H protein (126 aa).

In terms of domain architecture, Lipoyl-binding spans 24–106 (TVTVGITDHA…YGEGWMYRIK (83 aa)). Lys65 carries the post-translational modification N6-lipoyllysine.

The protein belongs to the GcvH family. The glycine cleavage system is composed of four proteins: P, T, L and H. (R)-lipoate is required as a cofactor.

Its function is as follows. The glycine cleavage system catalyzes the degradation of glycine. The H protein shuttles the methylamine group of glycine from the P protein to the T protein. This chain is Glycine cleavage system H protein, found in Psychrobacter sp. (strain PRwf-1).